Consider the following 120-residue polypeptide: BLOC-1-related complex subunit 8 (120 aa).

The segment at 101-120 (MNTSAQGHSQEKLSPPPSLA) is disordered. The residue at position 109 (S109) is a Phosphoserine.

The protein belongs to the BORCS8 family. In terms of assembly, component of the BLOC-one-related complex (BORC) which is composed of BLOC1S1, BLOC1S2, BORCS5, BORCS6, BORCS7, BORCS8, KXD1 and SNAPIN.

The protein resides in the lysosome membrane. In terms of biological role, as part of the BLOC-one-related complex (BORC), it plays a role in the movement and localization of lysosomes at the cell periphery. Associated with the cytosolic face of lysosomes, BORC recruits ARL8B to the lysosomal membrane and couples lysosomes to microtubule plus-end-directed kinesin motors, driving lysosome movement toward the cell periphery. In Mus musculus (Mouse), this protein is BLOC-1-related complex subunit 8.